The primary structure comprises 100 residues: Integration host factor subunit alpha (100 aa).

This sequence belongs to the bacterial histone-like protein family. Heterodimer of an alpha and a beta chain.

Functionally, this protein is one of the two subunits of integration host factor, a specific DNA-binding protein that functions in genetic recombination as well as in transcriptional and translational control. This is Integration host factor subunit alpha from Ectopseudomonas mendocina (strain ymp) (Pseudomonas mendocina).